We begin with the raw amino-acid sequence, 431 residues long: Glucose-1-phosphate adenylyltransferase (431 aa).

Alpha-D-glucose 1-phosphate-binding positions include Tyr108, Gly174, 189-190 (EK), and Ser207.

It belongs to the bacterial/plant glucose-1-phosphate adenylyltransferase family. As to quaternary structure, homotetramer.

It catalyses the reaction alpha-D-glucose 1-phosphate + ATP + H(+) = ADP-alpha-D-glucose + diphosphate. It participates in glycan biosynthesis; glycogen biosynthesis. Involved in the biosynthesis of ADP-glucose, a building block required for the elongation reactions to produce glycogen. Catalyzes the reaction between ATP and alpha-D-glucose 1-phosphate (G1P) to produce pyrophosphate and ADP-Glc. This Actinobacillus succinogenes (strain ATCC 55618 / DSM 22257 / CCUG 43843 / 130Z) protein is Glucose-1-phosphate adenylyltransferase.